Reading from the N-terminus, the 77-residue chain is Oxyopinin-4a (77 aa).

The first 20 residues, 1 to 20 (MKISQVFIFVFLLMISVAWA), serve as a signal peptide directing secretion. The propeptide occupies 21-47 (NEAYEEESNYLSERFDADVEEITPEFR). A disulfide bridge links C51 with C57.

Expressed by the venom gland.

The protein localises to the secreted. It localises to the target cell membrane. Disrupts cell membranes through the formation of pores. Has antibacterial activity against Gram-positive bacteria S.aureus (MIC=10 uM) and B.subtilis (MIC=0.5 uM) as well as Gram-negative bacteria P.fluorescens (MIC=1 uM) and E.coli (MIC=0.5 uM). Has hemolytic activity against human erythrocytes (EC(50)=7 uM). In Oxyopes takobius (Lynx spider), this protein is Oxyopinin-4a.